The primary structure comprises 265 residues: MMTTKPTFAVTLVTLFPEMAQAITGFGVTRRAVDNGQLQVETVNPRDFTEDRHRTVDDRPFGGGPGMVMKVEPLAKALQAARVANPAAKVIYLSPQGQPLTQAKATALAEQPGLILLAGRYEGVDERLLDAEVDEQISIGDYVLSGGELPALVLIDAVSRLIPGVLGHQDSAEQDSFSGEFENLLDCPHYTRPEVYGEQAVPPVLLSGNHELIRRWRLKQALGRTWQQRPDLLEARRARGLSKEEQQLLDEYIAEQPSHTAKTTD.

Residues Gly119 and 139–144 (IGDYVL) contribute to the S-adenosyl-L-methionine site.

Belongs to the RNA methyltransferase TrmD family. In terms of assembly, homodimer.

The protein localises to the cytoplasm. The enzyme catalyses guanosine(37) in tRNA + S-adenosyl-L-methionine = N(1)-methylguanosine(37) in tRNA + S-adenosyl-L-homocysteine + H(+). Specifically methylates guanosine-37 in various tRNAs. This Alcanivorax borkumensis (strain ATCC 700651 / DSM 11573 / NCIMB 13689 / SK2) protein is tRNA (guanine-N(1)-)-methyltransferase.